The sequence spans 233 residues: Endo-1,4-beta-xylanase 1 (233 aa).

A signal peptide spans 1–20 (MVSFTSIVTAVVALAGSALA). Asparagine 27 carries N-linked (GlcNAc...) asparagine glycosylation. The GH11 domain maps to 40 to 230 (QSTPSSTGRH…SAGNSNINVQ (191 aa)). Catalysis depends on glutamate 126, which acts as the Nucleophile. Catalysis depends on glutamate 217, which acts as the Proton donor.

The protein belongs to the glycosyl hydrolase 11 (cellulase G) family.

The protein resides in the secreted. It carries out the reaction Endohydrolysis of (1-&gt;4)-beta-D-xylosidic linkages in xylans.. It participates in glycan degradation; xylan degradation. In terms of biological role, endo-1,4-beta-xylanase involved in the hydrolysis of xylan, a major structural heterogeneous polysaccharide found in plant biomass representing the second most abundant polysaccharide in the biosphere, after cellulose. Accounts for approximately 70 percent of the endoxylanase activity in the culture filtrate. The sequence is that of Endo-1,4-beta-xylanase 1 (XYL1) from Pyricularia grisea (Crabgrass-specific blast fungus).